Consider the following 129-residue polypeptide: Small ribosomal subunit protein uS11 (129 aa).

This sequence belongs to the universal ribosomal protein uS11 family. In terms of assembly, part of the 30S ribosomal subunit. Interacts with proteins S7 and S18. Binds to IF-3.

Its function is as follows. Located on the platform of the 30S subunit, it bridges several disparate RNA helices of the 16S rRNA. Forms part of the Shine-Dalgarno cleft in the 70S ribosome. The protein is Small ribosomal subunit protein uS11 of Oceanobacillus iheyensis (strain DSM 14371 / CIP 107618 / JCM 11309 / KCTC 3954 / HTE831).